The sequence spans 133 residues: Basic leucine zipper transcriptional factor ATF-like 3 (133 aa).

The tract at residues 1–68 (MSQGPPAGGV…EHESLEQENS (68 aa)) is disordered. Ser-2 and Ser-24 each carry phosphoserine. Polar residues predominate over residues 11-24 (LQSSVAAPGNQPQS). In terms of domain architecture, bZIP spans 28 to 91 (DDRKVRRREK…RHLTEALKEH (64 aa)). The interval 30-55 (RKVRRREKNRVAAQRSRKKQTQKSDK) is basic motif. Basic and acidic residues predominate over residues 51-68 (QKSDKLHEEHESLEQENS). Residues 56–84 (LHEEHESLEQENSVLRREIAKLKEELRHL) are leucine-zipper.

The protein belongs to the bZIP family. Heterodimer; heterodimerizes with JUN family proteins. Interacts with JUN. In terms of tissue distribution, ubiquitously expressed.

The protein resides in the nucleus. AP-1 family transcription factor that controls the differentiation of CD8(+) thymic conventional dendritic cells in the immune system. Acts via the formation of a heterodimer with JUN family proteins that recognizes and binds DNA sequence 5'-TGA[CG]TCA-3' and regulates expression of target genes. Required for development of CD8-alpha(+) classical dendritic cells (cDCs) and related CD103(+) dendritic cells that cross-present antigens to CD8 T-cells and produce interleukin-12 (IL12) in response to pathogens. The chain is Basic leucine zipper transcriptional factor ATF-like 3 (Batf3) from Rattus norvegicus (Rat).